Reading from the N-terminus, the 261-residue chain is 1,6-dihydroxycyclohexa-2,4-diene-1-carboxylate dehydrogenase (261 aa).

Residue 13-37 (IVTGAAQGIGRGVALRIAQEGGCLI) coordinates NAD(+). Residue Ser-145 participates in substrate binding. Tyr-156 serves as the catalytic Proton acceptor.

The protein belongs to the short-chain dehydrogenases/reductases (SDR) family. As to quaternary structure, homodimer.

It catalyses the reaction (1R,6S)-1,6-dihydroxycyclohexa-2,4-diene-1-carboxylate + NAD(+) = catechol + CO2 + NADH. The protein operates within aromatic compound metabolism; benzoate degradation via hydroxylation; catechol from benzoate: step 2/2. Degradation of 2-hydro-1,2-dihydroxy benzoate (DHB) to catechol. The protein is 1,6-dihydroxycyclohexa-2,4-diene-1-carboxylate dehydrogenase (benD) of Acinetobacter baylyi (strain ATCC 33305 / BD413 / ADP1).